A 793-amino-acid polypeptide reads, in one-letter code: Protein PAT1 homolog (793 aa).

Phosphoserine occurs at positions 200 and 208. 2 disordered regions span residues 203–256 (PPGS…TGNR) and 292–312 (MLQQ…GSQN). A compositionally biased stretch (polar residues) spans 219–242 (PYQSGGPQMGSPNFSPFPNLQPQL). Phosphoserine is present on residues serine 342 and serine 343. The interval 476–501 (RPLLEVDPPNSAKFGNAEHKPTDKPL) is disordered. Residues 491-501 (NAEHKPTDKPL) are compositionally biased toward basic and acidic residues.

In terms of assembly, interacts with MPK4 and SUMM2. In terms of processing, phosphorylated at Ser-208 by MPK4 upon flg22 elicitation. Phosphorylated at Ser-200, Ser-342 and Ser-343 upon flg22 elicitation.

It localises to the cytoplasm. It is found in the P-body. Its function is as follows. Activator of mRNA decapping. Involved in mRNA decay via decapping. Involved in disease resistance in response to biotrophic and necrotrophic pathogens. Is part of a signaling pathway including MPK4 and the disease resistance protein SUMM2. The sequence is that of Protein PAT1 homolog from Arabidopsis thaliana (Mouse-ear cress).